Reading from the N-terminus, the 59-residue chain is MAKLEITLKRSLIGRPQPQRKTVQALGLGKTNSVVVKEDNPAIRGMITKVSHLVDVKEV.

Belongs to the universal ribosomal protein uL30 family. As to quaternary structure, part of the 50S ribosomal subunit.

The polypeptide is Large ribosomal subunit protein uL30 (Listeria innocua serovar 6a (strain ATCC BAA-680 / CLIP 11262)).